Consider the following 440-residue polypeptide: GTPase Der (440 aa).

2 EngA-type G domains span residues 3-167 (PIIA…PYDR) and 176-351 (TRIA…EQYC). GTP is bound by residues 9–16 (GRPNVGKS), 56–60 (DTGGF), 119–122 (NKVD), 182–189 (GRPNVGKS), 229–233 (DTAGI), and 294–297 (NKWD). Residues 352–436 (KRVTTGELNR…PLKLIFRGRD (85 aa)) enclose the KH-like domain.

Belongs to the TRAFAC class TrmE-Era-EngA-EngB-Septin-like GTPase superfamily. EngA (Der) GTPase family. As to quaternary structure, associates with the 50S ribosomal subunit.

Its function is as follows. GTPase that plays an essential role in the late steps of ribosome biogenesis. This chain is GTPase Der, found in Geobacter sp. (strain M21).